A 301-amino-acid polypeptide reads, in one-letter code: uncharacterized protein (301 aa).

Residues Ser44 and Tyr107 each act as charge relay system in the active site. Tyr133 functions as the Proton donor in the catalytic mechanism. Lys162 serves as the catalytic Schiff-base intermediate with substrate.

Belongs to the DapA family. As to quaternary structure, homotetramer.

The protein resides in the cytoplasm. This is an uncharacterized protein from Pyrobaculum neutrophilum (strain DSM 2338 / JCM 9278 / NBRC 100436 / V24Sta) (Thermoproteus neutrophilus).